The primary structure comprises 106 residues: Glutaredoxin-1 (106 aa).

A2 bears the N-acetylalanine mark. The 104-residue stretch at 3-106 (QEFVNCKIQP…TRLKQIGALQ (104 aa)) folds into the Glutaredoxin domain. K9 carries the post-translational modification N6-succinyllysine. Disulfide bonds link C23–C26 and C79–C83.

Belongs to the glutaredoxin family.

It is found in the cytoplasm. Functionally, has a glutathione-disulfide oxidoreductase activity in the presence of NADPH and glutathione reductase. Reduces low molecular weight disulfides and proteins. This is Glutaredoxin-1 (GLRX) from Homo sapiens (Human).